Reading from the N-terminus, the 109-residue chain is Ubiquitin-related modifier 1 homolog (109 aa).

The residue at position 109 (Gly109) is a 1-thioglycine. Residue Gly109 forms a Glycyl lysine isopeptide (Gly-Lys) (interchain with K-? in acceptor proteins) linkage.

Belongs to the URM1 family. In terms of processing, C-terminal thiocarboxylation occurs in 2 steps, it is first acyl-adenylated (-COAMP) via the hesA/moeB/thiF part of the MOCS3 homolog, then thiocarboxylated (-COSH) via the rhodanese domain of the MOCS3 homolog.

The protein localises to the cytoplasm. Its pathway is tRNA modification; 5-methoxycarbonylmethyl-2-thiouridine-tRNA biosynthesis. Functionally, acts as a sulfur carrier required for 2-thiolation of mcm(5)S(2)U at tRNA wobble positions of cytosolic tRNA(Lys), tRNA(Glu) and tRNA(Gln). Serves as sulfur donor in tRNA 2-thiolation reaction by being thiocarboxylated (-COSH) at its C-terminus by MOCS3. The sulfur is then transferred to tRNA to form 2-thiolation of mcm(5)S(2)U. Also acts as a ubiquitin-like protein (UBL) that is covalently conjugated via an isopeptide bond to lysine residues of target proteins. The thiocarboxylated form serves as substrate for conjugation and oxidative stress specifically induces the formation of UBL-protein conjugates. The sequence is that of Ubiquitin-related modifier 1 homolog from Culex quinquefasciatus (Southern house mosquito).